The sequence spans 325 residues: ATP phosphoribosyltransferase (325 aa).

It belongs to the ATP phosphoribosyltransferase family. Long subfamily. It depends on Mg(2+) as a cofactor.

It localises to the cytoplasm. The enzyme catalyses 1-(5-phospho-beta-D-ribosyl)-ATP + diphosphate = 5-phospho-alpha-D-ribose 1-diphosphate + ATP. Its pathway is amino-acid biosynthesis; L-histidine biosynthesis; L-histidine from 5-phospho-alpha-D-ribose 1-diphosphate: step 1/9. With respect to regulation, feedback inhibited by histidine. Catalyzes the condensation of ATP and 5-phosphoribose 1-diphosphate to form N'-(5'-phosphoribosyl)-ATP (PR-ATP). Has a crucial role in the pathway because the rate of histidine biosynthesis seems to be controlled primarily by regulation of HisG enzymatic activity. This chain is ATP phosphoribosyltransferase, found in Rhodopseudomonas palustris (strain BisA53).